Reading from the N-terminus, the 187-residue chain is ATP synthase subunit b, chloroplastic (187 aa).

The chain crosses the membrane as a helical span at residues 29–49 (LAVVLGVLIYLGKGVCAGCIL).

It belongs to the ATPase B chain family. In terms of assembly, F-type ATPases have 2 components, F(1) - the catalytic core - and F(0) - the membrane proton channel. F(1) has five subunits: alpha(3), beta(3), gamma(1), delta(1), epsilon(1). F(0) has four main subunits: a(1), b(1), b'(1) and c(10-14). The alpha and beta chains form an alternating ring which encloses part of the gamma chain. F(1) is attached to F(0) by a central stalk formed by the gamma and epsilon chains, while a peripheral stalk is formed by the delta, b and b' chains.

It localises to the plastid. The protein resides in the chloroplast thylakoid membrane. In terms of biological role, f(1)F(0) ATP synthase produces ATP from ADP in the presence of a proton or sodium gradient. F-type ATPases consist of two structural domains, F(1) containing the extramembraneous catalytic core and F(0) containing the membrane proton channel, linked together by a central stalk and a peripheral stalk. During catalysis, ATP synthesis in the catalytic domain of F(1) is coupled via a rotary mechanism of the central stalk subunits to proton translocation. Component of the F(0) channel, it forms part of the peripheral stalk, linking F(1) to F(0). This is ATP synthase subunit b, chloroplastic from Angiopteris evecta (Mule's foot fern).